The primary structure comprises 509 residues: ATP synthase subunit alpha (509 aa).

ATP is bound at residue 171-178 (GDRKTGKT).

This sequence belongs to the ATPase alpha/beta chains family. F-type ATPases have 2 components, CF(1) - the catalytic core - and CF(0) - the membrane proton channel. CF(1) has five subunits: alpha(3), beta(3), gamma(1), delta(1), epsilon(1). CF(0) has three main subunits: a(1), b(2) and c(9-12). The alpha and beta chains form an alternating ring which encloses part of the gamma chain. CF(1) is attached to CF(0) by a central stalk formed by the gamma and epsilon chains, while a peripheral stalk is formed by the delta and b chains.

Its subcellular location is the cell inner membrane. The catalysed reaction is ATP + H2O + 4 H(+)(in) = ADP + phosphate + 5 H(+)(out). In terms of biological role, produces ATP from ADP in the presence of a proton gradient across the membrane. The alpha chain is a regulatory subunit. In Ehrlichia chaffeensis (strain ATCC CRL-10679 / Arkansas), this protein is ATP synthase subunit alpha.